A 1378-amino-acid chain; its full sequence is DNA-directed RNA polymerase subunit beta (1378 aa).

Belongs to the RNA polymerase beta chain family. As to quaternary structure, the RNAP catalytic core consists of 2 alpha, 1 beta, 1 beta' and 1 omega subunit. When a sigma factor is associated with the core the holoenzyme is formed, which can initiate transcription.

The catalysed reaction is RNA(n) + a ribonucleoside 5'-triphosphate = RNA(n+1) + diphosphate. Its function is as follows. DNA-dependent RNA polymerase catalyzes the transcription of DNA into RNA using the four ribonucleoside triphosphates as substrates. This chain is DNA-directed RNA polymerase subunit beta, found in Mesorhizobium japonicum (strain LMG 29417 / CECT 9101 / MAFF 303099) (Mesorhizobium loti (strain MAFF 303099)).